A 236-amino-acid polypeptide reads, in one-letter code: NAD-dependent protein deacetylase (236 aa).

Residues 1–236 enclose the Deacetylase sirtuin-type domain; it reads MIKDWLQESN…EFLRSISNEG (236 aa). NAD(+)-binding residues include A18, T22, F29, R30, Q96, V98, D99, and H114. F29 provides a ligand contact to nicotinamide. Nicotinamide-binding residues include V98 and D99. H114 functions as the Proton acceptor in the catalytic mechanism. Zn(2+) contacts are provided by C122, C125, C141, and C143. Positions 181, 182, 206, and 225 each coordinate NAD(+).

The protein belongs to the sirtuin family. Class U subfamily. Requires Zn(2+) as cofactor.

Its subcellular location is the cytoplasm. It catalyses the reaction N(6)-acetyl-L-lysyl-[protein] + NAD(+) + H2O = 2''-O-acetyl-ADP-D-ribose + nicotinamide + L-lysyl-[protein]. In terms of biological role, NAD-dependent protein deacetylase which modulates the activities of several enzymes which are inactive in their acetylated form. The polypeptide is NAD-dependent protein deacetylase (Oceanobacillus iheyensis (strain DSM 14371 / CIP 107618 / JCM 11309 / KCTC 3954 / HTE831)).